Here is a 295-residue protein sequence, read N- to C-terminus: Glycine--tRNA ligase alpha subunit (295 aa).

It belongs to the class-II aminoacyl-tRNA synthetase family. Tetramer of two alpha and two beta subunits.

It is found in the cytoplasm. The enzyme catalyses tRNA(Gly) + glycine + ATP = glycyl-tRNA(Gly) + AMP + diphosphate. The protein is Glycine--tRNA ligase alpha subunit of Desulforamulus reducens (strain ATCC BAA-1160 / DSM 100696 / MI-1) (Desulfotomaculum reducens).